An 87-amino-acid polypeptide reads, in one-letter code: Large ribosomal subunit protein bL28 (87 aa).

The protein belongs to the bacterial ribosomal protein bL28 family.

The sequence is that of Large ribosomal subunit protein bL28 from Methylacidiphilum infernorum (isolate V4) (Methylokorus infernorum (strain V4)).